Here is a 194-residue protein sequence, read N- to C-terminus: Peroxynitrite isomerase 1 (194 aa).

Residues 40-46 carry the GXWXGXG motif; the sequence is GVWRGEG. Residues lysine 157 and histidine 184 each coordinate heme b.

It belongs to the nitrobindin family. Homodimer. Heme b is required as a cofactor.

It carries out the reaction peroxynitrite = nitrate. It participates in nitrogen metabolism. In terms of biological role, heme-binding protein able to scavenge peroxynitrite and to protect free L-tyrosine against peroxynitrite-mediated nitration, by acting as a peroxynitrite isomerase that converts peroxynitrite to nitrate. Therefore, this protein likely plays a role in peroxynitrite sensing and in the detoxification of reactive nitrogen and oxygen species (RNS and ROS, respectively). Is able to bind nitric oxide (NO) in vitro, but may act as a sensor of peroxynitrite levels in vivo. The chain is Peroxynitrite isomerase 1 from Mycobacterium ulcerans (strain Agy99).